The chain runs to 857 residues: Cadherin-related family member 1a (857 aa).

A signal peptide spans 1-25 (MKNAREIQFSSFLLLAHFCFVGAQS). The Extracellular portion of the chain corresponds to 26 to 709 (DYAPYFYDNG…RENPMHFLGL (684 aa)). 6 consecutive Cadherin domains span residues 40–139 (NGNM…RPQF), 140–252 (QNMP…PPIF), 253–359 (IGTP…PPTF), 365–478 (PQNV…APKF), 479–582 (TSDF…PPAF), and 574–693 (DLND…GPLT). A helical membrane pass occupies residues 710–730 (ISGVILILVFVTVIISTVIFV). Residues 731 to 857 (RRNKANRILP…LEQKNMANRY (127 aa)) are Cytoplasmic-facing. Residues 746–765 (RKKRKPQKQDDFQEPFREEQ) form a disordered region. Residues 752–765 (QKQDDFQEPFREEQ) show a composition bias toward basic and acidic residues.

Expressed in photoreceptor cells of the outer nuclear layer of the retina and in the pinal gland.

It is found in the membrane. Functionally, potential calcium-dependent cell-adhesion protein. Plays a role in the organization of retinal cell layers and Muller glia morphology. The protein is Cadherin-related family member 1a of Danio rerio (Zebrafish).